A 169-amino-acid polypeptide reads, in one-letter code: MSDNTLYLRREKRFLVLLGIICLALIGGALYMQVVLDEAPCPLCILQRYALLFIAIFAFIGAAMPGRRSVTAFETLVTLSALGGIAAAGRHVWILAHPSDSCGIDVLQPIVDGLPLATLFPTGFQVSGFCTTPYPPVLGLSLAQWALTAFVLTAVLVPACIIRNRRKPY.

The Cytoplasmic segment spans residues 1–14 (MSDNTLYLRREKRF). A helical membrane pass occupies residues 15–31 (LVLLGIICLALIGGALY). Residues 32 to 49 (MQVVLDEAPCPLCILQRY) lie on the Periplasmic side of the membrane. Cys41 and Cys44 are joined by a disulfide. The chain crosses the membrane as a helical span at residues 50-65 (ALLFIAIFAFIGAAMP). The Cytoplasmic portion of the chain corresponds to 66-72 (GRRSVTA). A helical transmembrane segment spans residues 73–89 (FETLVTLSALGGIAAAG). Residues 90–144 (RHVWILAHPSDSCGIDVLQPIVDGLPLATLFPTGFQVSGFCTTPYPPVLGLSLAQ) are Periplasmic-facing. Cys102 and Cys130 form a disulfide bridge. Residues 145–163 (WALTAFVLTAVLVPACIIR) traverse the membrane as a helical segment. Topologically, residues 164–169 (NRRKPY) are cytoplasmic.

Belongs to the DsbB family.

It is found in the cell inner membrane. Its function is as follows. Required for disulfide bond formation in some periplasmic proteins. Acts by oxidizing the DsbA protein. The protein is Disulfide bond formation protein B 1 of Pseudomonas syringae pv. syringae (strain B728a).